A 229-amino-acid polypeptide reads, in one-letter code: Lipoprotein-releasing system ATP-binding protein LolD 1 (229 aa).

Residues 2–229 enclose the ABC transporter domain; it reads LVVSELSKSY…VRRGRFGITA (228 aa). ATP is bound at residue 38-45; the sequence is GPSGSGKT.

Belongs to the ABC transporter superfamily. Lipoprotein translocase (TC 3.A.1.125) family. As to quaternary structure, the complex is composed of two ATP-binding proteins (LolD) and two transmembrane proteins (LolC and LolE).

It localises to the cell inner membrane. Functionally, part of the ABC transporter complex LolCDE involved in the translocation of mature outer membrane-directed lipoproteins, from the inner membrane to the periplasmic chaperone, LolA. Responsible for the formation of the LolA-lipoprotein complex in an ATP-dependent manner. This is Lipoprotein-releasing system ATP-binding protein LolD 1 from Rhodopirellula baltica (strain DSM 10527 / NCIMB 13988 / SH1).